The sequence spans 70 residues: MLKMGVVLFVFLVLFPLATLQLDADQPVERYAENKQLVSPYERRQIILHALGQRQCCDWQWCDGACDCCA.

The signal sequence occupies residues 1 to 24 (MLKMGVVLFVFLVLFPLATLQLDA). Positions 25–54 (DQPVERYAENKQLVSPYERRQIILHALGQR) are excised as a propeptide. 3 disulfide bridges follow: Cys56–Cys66, Cys57–Cys68, and Cys62–Cys69.

Belongs to the conotoxin M superfamily. Expressed by the venom duct.

The protein localises to the secreted. This Conus tessulatus (Tessellate cone) protein is Conotoxin TsMLKM-011.